The chain runs to 633 residues: Chaperone protein dnaK2 (633 aa).

At Thr196 the chain carries Phosphothreonine; by autocatalysis. The interval 600 to 633 is disordered; it reads ATADGGPAQHAATGGPTSGGGGGDDVIDAEFDKG. Positions 624-633 are enriched in acidic residues; it reads DVIDAEFDKG.

This sequence belongs to the heat shock protein 70 family.

Functionally, acts as a chaperone. The polypeptide is Chaperone protein dnaK2 (dnaK2) (Streptomyces avermitilis (strain ATCC 31267 / DSM 46492 / JCM 5070 / NBRC 14893 / NCIMB 12804 / NRRL 8165 / MA-4680)).